A 468-amino-acid polypeptide reads, in one-letter code: 6-phosphogluconate dehydrogenase, decarboxylating (468 aa).

NADP(+) is bound by residues 10-15, 33-35, 74-76, and Asn-102; these read GMAVMG, NRS, and VKA. Substrate-binding positions include Asn-102 and 128 to 130; that span reads SGG. Lys-183 (proton acceptor) is an active-site residue. 186-187 lines the substrate pocket; that stretch reads HN. Residue Glu-190 is the Proton donor of the active site. Residues Tyr-191, Lys-260, Arg-287, Arg-445, and His-451 each coordinate substrate.

It belongs to the 6-phosphogluconate dehydrogenase family. In terms of assembly, homodimer.

The enzyme catalyses 6-phospho-D-gluconate + NADP(+) = D-ribulose 5-phosphate + CO2 + NADPH. The protein operates within carbohydrate degradation; pentose phosphate pathway; D-ribulose 5-phosphate from D-glucose 6-phosphate (oxidative stage): step 3/3. Functionally, catalyzes the oxidative decarboxylation of 6-phosphogluconate to ribulose 5-phosphate and CO(2), with concomitant reduction of NADP to NADPH. This Klebsiella pneumoniae protein is 6-phosphogluconate dehydrogenase, decarboxylating (gnd).